A 321-amino-acid polypeptide reads, in one-letter code: Malate dehydrogenase (321 aa).

NAD(+)-binding positions include 10–15 (GAGQIG) and Asp-34. The substrate site is built by Arg-83 and Arg-89. Residues Asn-96 and 119-121 (VTN) contribute to the NAD(+) site. The substrate site is built by Asn-121 and Arg-152. His-176 acts as the Proton acceptor in catalysis.

Belongs to the LDH/MDH superfamily. MDH type 3 family.

The catalysed reaction is (S)-malate + NAD(+) = oxaloacetate + NADH + H(+). In terms of biological role, catalyzes the reversible oxidation of malate to oxaloacetate. This is Malate dehydrogenase from Azorhizobium caulinodans (strain ATCC 43989 / DSM 5975 / JCM 20966 / LMG 6465 / NBRC 14845 / NCIMB 13405 / ORS 571).